A 431-amino-acid polypeptide reads, in one-letter code: Enolase (431 aa).

Glutamine 175 contributes to the (2R)-2-phosphoglycerate binding site. Glutamate 217 serves as the catalytic Proton donor. Mg(2+)-binding residues include aspartate 254, glutamate 295, and aspartate 322. Lysine 347, arginine 376, serine 377, and lysine 398 together coordinate (2R)-2-phosphoglycerate. Lysine 347 functions as the Proton acceptor in the catalytic mechanism.

Belongs to the enolase family. Mg(2+) serves as cofactor.

Its subcellular location is the cytoplasm. It localises to the secreted. It is found in the cell surface. It catalyses the reaction (2R)-2-phosphoglycerate = phosphoenolpyruvate + H2O. It participates in carbohydrate degradation; glycolysis; pyruvate from D-glyceraldehyde 3-phosphate: step 4/5. Functionally, catalyzes the reversible conversion of 2-phosphoglycerate (2-PG) into phosphoenolpyruvate (PEP). It is essential for the degradation of carbohydrates via glycolysis. The polypeptide is Enolase (Anaplasma marginale (strain St. Maries)).